A 364-amino-acid polypeptide reads, in one-letter code: Histidinol-phosphate aminotransferase 1 (364 aa).

N6-(pyridoxal phosphate)lysine is present on Lys211.

It belongs to the class-II pyridoxal-phosphate-dependent aminotransferase family. Histidinol-phosphate aminotransferase subfamily. As to quaternary structure, homodimer. Pyridoxal 5'-phosphate is required as a cofactor.

The enzyme catalyses L-histidinol phosphate + 2-oxoglutarate = 3-(imidazol-4-yl)-2-oxopropyl phosphate + L-glutamate. Its pathway is amino-acid biosynthesis; L-histidine biosynthesis; L-histidine from 5-phospho-alpha-D-ribose 1-diphosphate: step 7/9. This Legionella pneumophila subsp. pneumophila (strain Philadelphia 1 / ATCC 33152 / DSM 7513) protein is Histidinol-phosphate aminotransferase 1.